Reading from the N-terminus, the 219-residue chain is MRMRKKPWARPELESCNFFIVNPKENKGKWKESFNNENPIYLELGCGKGVFVAVHGSNNENINYIAIDIKDEVLGLAKRNIEKAYKEKNKELNNIKLMAQEIGLINEMLDENDKISRIYINFCNPWPKKKHKKRRLTHTRQLTQYRNFLKENGEIWFKTDDDELFEESLEYFKEGKFRIEYITYDLHTSGFEGNVQTEHERMFTEQGIKTKFLIAIKED.

S-adenosyl-L-methionine contacts are provided by E43, D68, E101, and N124. Substrate-binding residues include K128 and D160.

Belongs to the class I-like SAM-binding methyltransferase superfamily. TrmB family.

The catalysed reaction is guanosine(46) in tRNA + S-adenosyl-L-methionine = N(7)-methylguanosine(46) in tRNA + S-adenosyl-L-homocysteine. It participates in tRNA modification; N(7)-methylguanine-tRNA biosynthesis. Catalyzes the formation of N(7)-methylguanine at position 46 (m7G46) in tRNA. This chain is tRNA (guanine-N(7)-)-methyltransferase, found in Clostridium botulinum (strain Alaska E43 / Type E3).